The following is a 695-amino-acid chain: MESNYSGVVNGYDVSFLPTSIPDLGFGVPSSSDFDLRMDQYYHQPSIWVPDQDHHFSPPADEIDSENTLLKYVNQLLMEESLAEKQSIFYDSLALRQTEEMLQQVISDSQTQSSIPNNSITTSSSSNSGDYSNSSNSSVRIENEVLFDNKHLGDSGVVSFPGSNMLRGGEQFGQPANEILVRSMFSDAESVLQFKRGLEEASKFLPNTDQWIFNLEPEMERVVPVKVEEGWSAISKTRKNHHEREEEEDDLEEARRRSKQFAVNEEDGKLTEMFDKVLLLDGECDPQIIEDGENGSSKALVKKGRAKKKSRAVDFRTLLTLCAQSVSAGDKITADDLLRQIRKQCSPVGDASQRLAHFFANALEARLEGSTGTMIQSYYDSISSKKRTAAQILKSYSVFLSASPFMTLIYFFSNKMILDAAKDASVLHIVDFGILYGFQWPMFIQHLSKSNPGLRKLRITGIEIPQHGLRPTERIQDTGRRLTEYCKRFGVPFEYNAIASKNWETIKMEEFKIRPNEVLAVNAVLRFKNLRDVIPGEEDCPRDGFLKLIRDMNPNVFLSSTVNGSFNAPFFTTRFKEALFHYSALFDLFGATLSKENPERIHFEGEFYGREVMNVIACEGVDRVERPETYKQWQVRMIRAGFKQKPVEAELVQLFREKMKKWGYHKDFVLDEDSNWFLQGWKGRILFSSSCWVPS.

2 disordered regions span residues 105–136 (VISD…NSSN) and 234–260 (ISKT…RSKQ). The segment covering 113–136 (SSIPNNSITTSSSSNSGDYSNSSN) has biased composition (low complexity). The stretch at 233–266 (AISKTRKNHHEREEEEDDLEEARRRSKQFAVNEE) forms a coiled coil. Residues 306 to 693 (AKKKSRAVDF…RILFSSSCWV (388 aa)) form the GRAS domain. Positions 313-377 (VDFRTLLTLC…EGSTGTMIQS (65 aa)) are leucine repeat I (LRI). The VHIID stretch occupies residues 396–461 (YSVFLSASPF…PGLRKLRITG (66 aa)). The short motif at 427–431 (LHIVD) is the VHIID element. The leucine repeat II (LRII) stretch occupies residues 477-509 (DTGRRLTEYCKRFGVPFEYNAIASKNWETIKME). Positions 519–614 (LAVNAVLRFK…GEFYGREVMN (96 aa)) are PFYRE. An SAW region spans residues 617–693 (ACEGVDRVER…RILFSSSCWV (77 aa)).

The protein belongs to the GRAS family. In terms of tissue distribution, expressed in seedlings, roots, cotyledons, leaves and sepals.

It is found in the nucleus. In terms of biological role, probable transcription factor involved in plant development. In Arabidopsis thaliana (Mouse-ear cress), this protein is Scarecrow-like protein 31 (SCL31).